A 342-amino-acid polypeptide reads, in one-letter code: Aromatic amino acid aminotransferase (342 aa).

Lysine 214 carries the post-translational modification N6-(pyridoxal phosphate)lysine.

Belongs to the class-II pyridoxal-phosphate-dependent aminotransferase family. In terms of assembly, homodimer. The cofactor is pyridoxal 5'-phosphate.

It carries out the reaction an aromatic L-alpha-amino acid + 2-oxoglutarate = an aromatic oxo-acid + L-glutamate. Aminotransferase that catalyzes the conversion of aromatic amino acids and 2-oxoglutarate into corresponding aromatic oxo acids and L-glutamate. This is Aromatic amino acid aminotransferase from Corynebacterium efficiens (strain DSM 44549 / YS-314 / AJ 12310 / JCM 11189 / NBRC 100395).